A 78-amino-acid chain; its full sequence is U-scoloptoxin(04)-Er1d (78 aa).

Positions 1 to 24 (MTRHLIFAAMLLVCLFVCWNAVGA) are cleaved as a signal peptide. Residues 25 to 28 (RDAR) constitute a propeptide that is removed on maturation.

Belongs to the scoloptoxin-04 family. Post-translationally, contains 2 disulfide bonds. Expressed by the venom gland.

The protein resides in the secreted. The chain is U-scoloptoxin(04)-Er1d from Ethmostigmus rubripes (Giant centipede).